Consider the following 162-residue polypeptide: Endoribonuclease YbeY (162 aa).

Zn(2+) is bound by residues His117, His121, and His127.

This sequence belongs to the endoribonuclease YbeY family. Zn(2+) serves as cofactor.

Its subcellular location is the cytoplasm. Functionally, single strand-specific metallo-endoribonuclease involved in late-stage 70S ribosome quality control and in maturation of the 3' terminus of the 16S rRNA. This is Endoribonuclease YbeY from Francisella tularensis subsp. holarctica (strain OSU18).